The following is a 331-amino-acid chain: Fructose-1,6-bisphosphatase class 1 2 (331 aa).

4 residues coordinate Mg(2+): E91, D112, L114, and D115. Residues 115–118, N207, Y238, and K268 contribute to the substrate site; that span reads DGSS. Residue E274 coordinates Mg(2+).

It belongs to the FBPase class 1 family. As to quaternary structure, homotetramer. Mg(2+) serves as cofactor.

It localises to the cytoplasm. It catalyses the reaction beta-D-fructose 1,6-bisphosphate + H2O = beta-D-fructose 6-phosphate + phosphate. It participates in carbohydrate biosynthesis; Calvin cycle. This is Fructose-1,6-bisphosphatase class 1 2 from Acaryochloris marina (strain MBIC 11017).